Consider the following 188-residue polypeptide: Josephin-2 (188 aa).

Positions 11–188 (PPTVYHERQR…EEKGSWLRTD (178 aa)) constitute a Josephin domain. Cys-24 functions as the Nucleophile in the catalytic mechanism. The Proton acceptor role is filled by His-125.

It localises to the cytoplasm. The protein localises to the cytosol. It carries out the reaction Thiol-dependent hydrolysis of ester, thioester, amide, peptide and isopeptide bonds formed by the C-terminal Gly of ubiquitin (a 76-residue protein attached to proteins as an intracellular targeting signal).. Its function is as follows. Cleaves 'Lys-63'-linked poly-ubiquitin chains, and with lesser efficiency 'Lys-48'-linked poly-ubiquitin chains (in vitro). May act as a deubiquitinating enzyme. This chain is Josephin-2 (JOSD2), found in Homo sapiens (Human).